The following is a 426-amino-acid chain: MAYQDALSIRELAQQHNALFGDSVALIASENVMSPLAREVMISDLESRYAEGLPHHRYYQGNNFVDLIEDKTNELLSKLFKTEQTDPRPISGTNANSAAIYALAKPGDLVAVPALSGGGHISAAEFGILGMRGVRTISYPYDKNTMTVDPDEASKIIKREKPKVCLFGQSVFMFPVPLKEMKGAFDEVGCKVWYDGAHVLGLIAGRKFQDPLREGADIVTGSTHKTFPGPQHGVILGNTDSETWKSVRRAVFPGVLSNHHLNAMAALGITAAEELEFGEKYASDIIDNAKALAGELYSLGFKVLAEERGFTESHTMAVDVTQNGGGKYVAETLEASGIILNKNLLPWDDNKKSQNPSGIRIGVQEVTRTGMGKSEMKEIASLIYRAIVKKEEPSKIKEEVKDLKSSFRHVKYCYGDVDAYEYIKLI.

(6S)-5,6,7,8-tetrahydrofolate contacts are provided by residues leucine 115 and 119–121; that span reads GHI. The residue at position 225 (lysine 225) is an N6-(pyridoxal phosphate)lysine.

This sequence belongs to the SHMT family. Homodimer. Requires pyridoxal 5'-phosphate as cofactor.

The protein localises to the cytoplasm. Its pathway is amino-acid biosynthesis; glycine biosynthesis; glycine from L-serine: step 1/1. In terms of biological role, catalyzes the reversible interconversion of serine and glycine with a modified folate serving as the one-carbon carrier. Also exhibits a pteridine-independent aldolase activity toward beta-hydroxyamino acids, producing glycine and aldehydes, via a retro-aldol mechanism. The protein is Serine hydroxymethyltransferase of Thermoplasma volcanium (strain ATCC 51530 / DSM 4299 / JCM 9571 / NBRC 15438 / GSS1).